The following is a 72-amino-acid chain: Translation initiation factor IF-1 (72 aa).

The region spanning 1–72 (MAKEDAIELQ…SKGRIVFRAR (72 aa)) is the S1-like domain.

The protein belongs to the IF-1 family. Component of the 30S ribosomal translation pre-initiation complex which assembles on the 30S ribosome in the order IF-2 and IF-3, IF-1 and N-formylmethionyl-tRNA(fMet); mRNA recruitment can occur at any time during PIC assembly.

It is found in the cytoplasm. Its function is as follows. One of the essential components for the initiation of protein synthesis. Stabilizes the binding of IF-2 and IF-3 on the 30S subunit to which N-formylmethionyl-tRNA(fMet) subsequently binds. Helps modulate mRNA selection, yielding the 30S pre-initiation complex (PIC). Upon addition of the 50S ribosomal subunit IF-1, IF-2 and IF-3 are released leaving the mature 70S translation initiation complex. This is Translation initiation factor IF-1 from Aliivibrio fischeri (strain ATCC 700601 / ES114) (Vibrio fischeri).